Consider the following 424-residue polypeptide: Gamma-glutamyl phosphate reductase (424 aa).

It belongs to the gamma-glutamyl phosphate reductase family.

It localises to the cytoplasm. It catalyses the reaction L-glutamate 5-semialdehyde + phosphate + NADP(+) = L-glutamyl 5-phosphate + NADPH + H(+). Its pathway is amino-acid biosynthesis; L-proline biosynthesis; L-glutamate 5-semialdehyde from L-glutamate: step 2/2. Functionally, catalyzes the NADPH-dependent reduction of L-glutamate 5-phosphate into L-glutamate 5-semialdehyde and phosphate. The product spontaneously undergoes cyclization to form 1-pyrroline-5-carboxylate. In Shewanella sediminis (strain HAW-EB3), this protein is Gamma-glutamyl phosphate reductase.